Here is an 84-residue protein sequence, read N- to C-terminus: Large ribosomal subunit protein bL27 (84 aa).

Polar residues predominate over residues methionine 1–lysine 11. The segment at methionine 1–arginine 20 is disordered.

This sequence belongs to the bacterial ribosomal protein bL27 family.

The polypeptide is Large ribosomal subunit protein bL27 (Mycoplasmopsis synoviae (strain 53) (Mycoplasma synoviae)).